The following is a 154-amino-acid chain: Myoglobin (154 aa).

One can recognise a Globin domain in the interval 2–148; that stretch reads GLSDGEWQLV…FRNDMAAKYK (147 aa). At serine 4 the chain carries Phosphoserine. Position 65 (histidine 65) interacts with nitrite. Histidine 65 contacts O2. A Phosphothreonine modification is found at threonine 68. A heme b-binding site is contributed by histidine 94.

The protein belongs to the globin family. Monomeric.

It is found in the cytoplasm. It localises to the sarcoplasm. It catalyses the reaction Fe(III)-heme b-[protein] + nitric oxide + H2O = Fe(II)-heme b-[protein] + nitrite + 2 H(+). The catalysed reaction is H2O2 + AH2 = A + 2 H2O. Monomeric heme protein which primary function is to store oxygen and facilitate its diffusion within muscle tissues. Reversibly binds oxygen through a pentacoordinated heme iron and enables its timely and efficient release as needed during periods of heightened demand. Depending on the oxidative conditions of tissues and cells, and in addition to its ability to bind oxygen, it also has a nitrite reductase activity whereby it regulates the production of bioactive nitric oxide. Under stress conditions, like hypoxia and anoxia, it also protects cells against reactive oxygen species thanks to its pseudoperoxidase activity. In Erythrocebus patas (Red guenon), this protein is Myoglobin (MB).